The sequence spans 270 residues: Diaminopimelate epimerase (270 aa).

Substrate contacts are provided by N15, Q49, and N66. C75 (proton donor) is an active-site residue. Residues 76-77 (GN), N155, N187, and 204-205 (ER) contribute to the substrate site. C213 serves as the catalytic Proton acceptor. 214 to 215 (GS) is a binding site for substrate.

The protein belongs to the diaminopimelate epimerase family. In terms of assembly, homodimer.

The protein localises to the cytoplasm. The catalysed reaction is (2S,6S)-2,6-diaminopimelate = meso-2,6-diaminopimelate. The protein operates within amino-acid biosynthesis; L-lysine biosynthesis via DAP pathway; DL-2,6-diaminopimelate from LL-2,6-diaminopimelate: step 1/1. Catalyzes the stereoinversion of LL-2,6-diaminopimelate (L,L-DAP) to meso-diaminopimelate (meso-DAP), a precursor of L-lysine and an essential component of the bacterial peptidoglycan. The chain is Diaminopimelate epimerase from Rickettsia massiliae (strain Mtu5).